We begin with the raw amino-acid sequence, 297 residues long: DNA processing protein DprA (297 aa).

Belongs to the DprA/Smf family. In terms of assembly, interacts with RecA. Interacts with ComFA and ComFC.

The protein localises to the cytoplasm. Protein that helps load RecA onto ssDNA during transformation. Binds cooperatively to circular ssDNA, is able to bridge different segments of DNA. Favors the loading of RecA onto SsbA- or SsbB-coated ssDNA and formation of RecA-DNA filaments. RecA-ATP cannot catalyze homologous DNA strand exchange; SsbA and DprA activate strand exchange by RecA-ATP. The sequence is that of DNA processing protein DprA from Bacillus subtilis (strain 168).